The following is a 57-amino-acid chain: MTVPKKRTSMSKKRIRKNIWKRKGYWAALKALSLAKSISTGHSKSFFVQQTSNKAAE.

It belongs to the bacterial ribosomal protein bL32 family.

The protein resides in the plastid. The protein localises to the chloroplast. The protein is Large ribosomal subunit protein bL32c of Drimys granadensis.